A 140-amino-acid polypeptide reads, in one-letter code: Gonadotropin subunit beta-2 (140 aa).

The signal sequence occupies residues 1-23 (MSVPASSFLLLCFLMNSFSPAQS). 6 cysteine pairs are disulfide-bonded: C29/C77, C43/C92, C46/C130, C54/C108, C58/C110, and C113/C120. N33 carries N-linked (GlcNAc...) asparagine glycosylation.

It belongs to the glycoprotein hormones subunit beta family. As to quaternary structure, heterodimer of an alpha and a beta chain.

It localises to the secreted. In terms of biological role, involved in gametogenesis and steroidogenesis. The protein is Gonadotropin subunit beta-2 (cgbb) of Ictalurus punctatus (Channel catfish).